Consider the following 362-residue polypeptide: 3-dehydroquinate synthase (362 aa).

NAD(+) is bound by residues 70-75 (EGEQYK), 104-108 (GVIGD), 128-129 (TT), lysine 141, lysine 150, and 168-171 (TLTT). Zn(2+) is bound by residues glutamate 183, histidine 246, and histidine 263.

It belongs to the sugar phosphate cyclases superfamily. Dehydroquinate synthase family. Co(2+) is required as a cofactor. Zn(2+) serves as cofactor. It depends on NAD(+) as a cofactor.

The protein localises to the cytoplasm. The enzyme catalyses 7-phospho-2-dehydro-3-deoxy-D-arabino-heptonate = 3-dehydroquinate + phosphate. The protein operates within metabolic intermediate biosynthesis; chorismate biosynthesis; chorismate from D-erythrose 4-phosphate and phosphoenolpyruvate: step 2/7. Functionally, catalyzes the conversion of 3-deoxy-D-arabino-heptulosonate 7-phosphate (DAHP) to dehydroquinate (DHQ). This is 3-dehydroquinate synthase from Histophilus somni (strain 2336) (Haemophilus somnus).